The primary structure comprises 145 residues: D-aminoacyl-tRNA deacylase (145 aa).

The Gly-cisPro motif, important for rejection of L-amino acids motif lies at 137–138; the sequence is GP.

Belongs to the DTD family. Homodimer.

It localises to the cytoplasm. It catalyses the reaction glycyl-tRNA(Ala) + H2O = tRNA(Ala) + glycine + H(+). The catalysed reaction is a D-aminoacyl-tRNA + H2O = a tRNA + a D-alpha-amino acid + H(+). An aminoacyl-tRNA editing enzyme that deacylates mischarged D-aminoacyl-tRNAs. Also deacylates mischarged glycyl-tRNA(Ala), protecting cells against glycine mischarging by AlaRS. Acts via tRNA-based rather than protein-based catalysis; rejects L-amino acids rather than detecting D-amino acids in the active site. By recycling D-aminoacyl-tRNA to D-amino acids and free tRNA molecules, this enzyme counteracts the toxicity associated with the formation of D-aminoacyl-tRNA entities in vivo and helps enforce protein L-homochirality. The sequence is that of D-aminoacyl-tRNA deacylase from Pseudomonas aeruginosa (strain LESB58).